The sequence spans 39 residues: Photosystem II reaction center protein Psb30 (39 aa).

The helical transmembrane segment at 12-32 (IFQLTFVALIMLAGPFVIFLL) threads the bilayer.

Belongs to the Psb30/Ycf12 family. In terms of assembly, PSII is composed of 1 copy each of membrane proteins PsbA, PsbB, PsbC, PsbD, PsbE, PsbF, PsbH, PsbI, PsbJ, PsbK, PsbL, PsbM, PsbT, PsbX, PsbY, PsbZ, Psb30/Ycf12, peripheral proteins PsbO, CyanoQ (PsbQ), PsbU, PsbV and a large number of cofactors. It forms dimeric complexes.

The protein resides in the cellular thylakoid membrane. Functionally, a core subunit of photosystem II (PSII), probably helps stabilize the reaction center. The protein is Photosystem II reaction center protein Psb30 of Microcystis aeruginosa (strain NIES-843 / IAM M-2473).